A 169-amino-acid chain; its full sequence is Eukaryotic translation initiation factor 5A-2 (169 aa).

Position 64 is a hypusine (Lys64).

It belongs to the eIF-5A family. In terms of processing, lys-51 undergoes hypusination, a unique post-translational modification that consists in the addition of a butylamino group from spermidine to lysine side chain, leading to the formation of the unusual amino acid hypusine. eIF-5As are the only known proteins to undergo this modification, which is essential for their function.

The protein localises to the cytoplasm. It is found in the nucleus. Translation factor that promotes translation elongation and termination, particularly upon ribosome stalling at specific amino acid sequence contexts. Binds between the exit (E) and peptidyl (P) site of the ribosome and promotes rescue of stalled ribosome: specifically required for efficient translation of polyproline-containing peptides as well as other motifs that stall the ribosome. Acts as a ribosome quality control (RQC) cofactor by joining the RQC complex to facilitate peptidyl transfer during CAT tailing step. The chain is Eukaryotic translation initiation factor 5A-2 (tif51b) from Schizosaccharomyces pombe (strain 972 / ATCC 24843) (Fission yeast).